The chain runs to 299 residues: Oxygen-dependent coproporphyrinogen-III oxidase (299 aa).

S92 provides a ligand contact to substrate. A divalent metal cation is bound by residues H96 and H106. Residue H106 is the Proton donor of the active site. Substrate is bound at residue 108–110 (NVR). Residues H145 and H175 each coordinate a divalent metal cation. Positions 240–275 (YVEFNLVWDRGTLFGLQTGGRTESILMSMPPLVRWE) are important for dimerization. A substrate-binding site is contributed by 258–260 (GGR).

Belongs to the aerobic coproporphyrinogen-III oxidase family. In terms of assembly, homodimer. It depends on a divalent metal cation as a cofactor.

Its subcellular location is the cytoplasm. The catalysed reaction is coproporphyrinogen III + O2 + 2 H(+) = protoporphyrinogen IX + 2 CO2 + 2 H2O. It participates in porphyrin-containing compound metabolism; protoporphyrin-IX biosynthesis; protoporphyrinogen-IX from coproporphyrinogen-III (O2 route): step 1/1. Involved in the heme biosynthesis. Catalyzes the aerobic oxidative decarboxylation of propionate groups of rings A and B of coproporphyrinogen-III to yield the vinyl groups in protoporphyrinogen-IX. This is Oxygen-dependent coproporphyrinogen-III oxidase from Salmonella schwarzengrund (strain CVM19633).